The primary structure comprises 259 residues: Global transcriptional regulator CodY (259 aa).

Residues 1–155 (MNLLEKTRQL…SATVVGMEIL (155 aa)) form a GAF domain region. Residues 203 to 222 (ASKIADRVGITRSVIVNALR) constitute a DNA-binding region (H-T-H motif).

Belongs to the CodY family.

The protein resides in the cytoplasm. In terms of biological role, DNA-binding global transcriptional regulator which is involved in the adaptive response to starvation and acts by directly or indirectly controlling the expression of numerous genes in response to nutrient availability. During rapid exponential growth, CodY is highly active and represses genes whose products allow adaptation to nutrient depletion. This is Global transcriptional regulator CodY from Exiguobacterium sp. (strain ATCC BAA-1283 / AT1b).